The sequence spans 422 residues: Ena/VASP-like protein (422 aa).

The region spanning 4-118 is the WH1 domain; sequence FEEFSEQSIC…NAMLFALNIM (115 aa). Over residues 120–135 the composition is skewed to polar residues; the sequence is SQEGGPSSQRQVQNGP. 2 disordered regions span residues 120 to 139 and 147 to 375; these read SQEGGPSSQRQVQNGPSPDE and VMEQ…PAGS. Position 136 is a phosphoserine (S136). Residues 147-163 are compositionally biased toward basic and acidic residues; it reads VMEQHQQQRQESLERRT. The segment covering 175–186 has biased composition (low complexity); sequence PSSAASAPVSCS. The segment covering 187-212 has biased composition (pro residues); that stretch reads GPPPPPPPPVPPPPTGATPPPPPPLP. The EVH2 block A stretch occupies residues 228 to 248; it reads GLAAAIAGAKLRRVQRPEDAS. The segment at 228-419 is EVH2; the sequence is GLAAAIAGAK…DAIRQELSGI (192 aa). The KLKR motif lies at 237 to 240; the sequence is KLRR. Positions 248 to 259 are enriched in low complexity; it reads SGGSSPSGTSKS. A phosphoserine mark is found at S252 and S265. The tract at residues 271–288 is EVH2 block B; it reads GGLMEEMNKLLAKRRKAA. A compositionally biased stretch (polar residues) spans 305–326; that stretch reads EDPSTSPSPGTRAASQPPNSSE. Residues S310, S312, S335, S337, S347, S355, S360, and S375 each carry the phosphoserine modification. Over residues 327–337 the composition is skewed to basic and acidic residues; it reads AGRKPWERSNS. Residues 348 to 368 are required for interaction with ZDHHC17; it reads RTPSVAKSPEAKSPLQSQPHS. Positions 385–419 are EVH2 block C; the sequence is DLDRMKQEILEEVVRELHKVKDEIIDAIRQELSGI. The stretch at 388–414 forms a coiled coil; it reads RMKQEILEEVVRELHKVKDEIIDAIRQ.

Belongs to the Ena/VASP family. As to quaternary structure, homotetramer. Binds to the SH3 domains of ABL1, LYN and SRC. Also binds to profilin, with preference for isoform IIa of PFN2, and the WW domain of APBB1/FE65. Binds to SEMA6A. Interacts, via the Pro-rich region, with the C-terminal SH3 domain of DNMBP. Interacts with RAPH1. Binds, via the EVH1 domain, the Pro-rich domain of Listeria monocytogenes actA. Binds, via the EVH1 domain, the Pro-rich domain of ZYX. Interacts with FYB1. Interacts with ZDHHC17. In terms of processing, phosphorylated by PKA; phosphorylation abolishes binding to SH3 domains of ABL and SRC.

The protein localises to the cytoplasm. The protein resides in the cytoskeleton. Its subcellular location is the stress fiber. It is found in the cell projection. It localises to the lamellipodium. In terms of biological role, ena/VASP proteins are actin-associated proteins involved in a range of processes dependent on cytoskeleton remodeling and cell polarity such as axon guidance and lamellipodial and filopodial dynamics in migrating cells. EVL enhances actin nucleation and polymerization. This is Ena/VASP-like protein (EVL) from Pongo abelii (Sumatran orangutan).